We begin with the raw amino-acid sequence, 2198 residues long: RNA-directed RNA polymerase L (2198 aa).

Positions 26–284 (KEALLSQVEV…AHSDSLAPEC (259 aa)) are endonuclease. Glu51, Asp89, and Glu102 together coordinate Mn(2+). Lys115 is a catalytic residue. The region spanning 1161 to 1359 (CDMKMAVNNG…FLSSKFNKFV (199 aa)) is the RdRp catalytic domain. Asp1319 lines the Mg(2+) pocket.

The protein belongs to the Bunyavirales RNA polymerase family. As to quaternary structure, homomultimer; the oligomeric structure is essential for the polymerase activity. Interacts with nucleoprotein N. Interacts with protein Z; this interaction inhibits viral transcription and replication, Z partially blocks the product exit tunnel for the releasing nascent RNA product. Mn(2+) is required as a cofactor. The cofactor is Mg(2+).

It is found in the virion. It localises to the host cytoplasm. The enzyme catalyses RNA(n) + a ribonucleoside 5'-triphosphate = RNA(n+1) + diphosphate. Its function is as follows. RNA-dependent RNA polymerase, which is responsible for the replication and transcription of the viral RNA genome using antigenomic RNA as an intermediate. During transcription, synthesizes subgenomic RNAs and assures their capping by a cap-snatching mechanism, which involves the endonuclease activity cleaving the host capped pre-mRNAs. These short capped RNAs are then used as primers for viral transcription. The 3'-end of subgenomic mRNAs molecules are heterogeneous and not polyadenylated. The replicase function is to direct synthesis of antigenomic and genomic RNA which are encapsidated and non capped. As a consequence of the use of the same enzyme for both transcription and replication, these mechanisms need to be well coordinated. These processes may be regulated by proteins N and Z in a dose-dependent manner. Z protein inhibits the viral polymerase L und thus the viral transcription and RNA synthesis. The protein is RNA-directed RNA polymerase L of Homo sapiens (Human).